Consider the following 178-residue polypeptide: Large ribosomal subunit protein uL6 (178 aa).

The protein belongs to the universal ribosomal protein uL6 family. Part of the 50S ribosomal subunit. Interacts weakly with protein L13.

In terms of biological role, this protein binds to the 23S rRNA, and is important in its secondary structure. It is located near the subunit interface in the base of the L7/L12 stalk, and near the tRNA binding site of the peptidyltransferase center. The chain is Large ribosomal subunit protein uL6 from Haloarcula marismortui (strain ATCC 43049 / DSM 3752 / JCM 8966 / VKM B-1809) (Halobacterium marismortui).